The sequence spans 118 residues: Putative membrane protein insertion efficiency factor (118 aa).

It belongs to the UPF0161 family.

It is found in the cell inner membrane. Could be involved in insertion of integral membrane proteins into the membrane. The chain is Putative membrane protein insertion efficiency factor from Helicobacter pylori (strain P12).